The primary structure comprises 78 residues: Probable [Fe-S]-dependent transcriptional repressor (78 aa).

Residues Cys56, Cys61, Cys64, and Cys70 each coordinate iron-sulfur cluster.

It belongs to the FeoC family.

Functionally, may function as a transcriptional regulator that controls feoABC expression. This Escherichia coli O9:H4 (strain HS) protein is Probable [Fe-S]-dependent transcriptional repressor.